Here is a 383-residue protein sequence, read N- to C-terminus: uncharacterized protein (383 aa).

An N-terminal signal peptide occupies residues 1 to 23 (MKLTSIPIASTLLSLLAASGTLA).

The protein belongs to the but2 family.

The protein localises to the cytoplasm. The protein resides in the nucleus. This is an uncharacterized protein from Schizosaccharomyces pombe (strain 972 / ATCC 24843) (Fission yeast).